We begin with the raw amino-acid sequence, 626 residues long: Alpha terpineol synthase, chloroplastic (626 aa).

A chloroplast-targeting transit peptide spans 1-38 (MALLSVAPLASKSRLHKTLITSAHHLKPSPTTIPTLPV). Residues Asp377, Asp381, and Asp529 each contribute to the Mg(2+) site. The short motif at 377–381 (DDIYD) is the DDXXD motif element.

The protein belongs to the terpene synthase family. Tpsd subfamily. It depends on Mg(2+) as a cofactor. Mn(2+) is required as a cofactor.

It localises to the plastid. Its subcellular location is the chloroplast. It carries out the reaction (2E)-geranyl diphosphate + H2O = (S)-alpha-terpineol + diphosphate. The catalysed reaction is (2E)-geranyl diphosphate + H2O = (R)-alpha-terpineol + diphosphate. It catalyses the reaction (2E)-geranyl diphosphate + H2O = (2E)-geraniol + diphosphate. The enzyme catalyses (2E)-geranyl diphosphate = terpinolene + diphosphate. It carries out the reaction (2E)-geranyl diphosphate = (4S)-limonene + diphosphate. It participates in terpene metabolism; oleoresin biosynthesis. It functions in the pathway secondary metabolite biosynthesis; terpenoid biosynthesis. In terms of biological role, monoterpene synthase (TPS) involved in the biosynthesis of monoterpene natural products included in conifer oleoresin secretions and volatile emissions; these compounds contribute to biotic and abiotic stress defense against herbivores and pathogens. Catalyzes the conversion of (2E)-geranyl diphosphate (GPP) to (-)-alpha-terpineol, (+)-alpha-terpineol and terpin-4-ol, and, to a lower extent, to geraniol, terpinolene and (-)-limonene. The polypeptide is Alpha terpineol synthase, chloroplastic (Pinus banksiana (Jack pine)).